The primary structure comprises 239 residues: Probable transcriptional regulatory protein BT9727_0453 (239 aa).

It belongs to the TACO1 family. YeeN subfamily.

The protein localises to the cytoplasm. This chain is Probable transcriptional regulatory protein BT9727_0453, found in Bacillus thuringiensis subsp. konkukian (strain 97-27).